A 306-amino-acid polypeptide reads, in one-letter code: 4-hydroxy-tetrahydrodipicolinate synthase (306 aa).

Residue Thr-46 coordinates pyruvate. The Proton donor/acceptor role is filled by Tyr-134. Lys-162 (schiff-base intermediate with substrate) is an active-site residue. Residue Val-204 participates in pyruvate binding.

This sequence belongs to the DapA family. Homotetramer; dimer of dimers.

It localises to the cytoplasm. It catalyses the reaction L-aspartate 4-semialdehyde + pyruvate = (2S,4S)-4-hydroxy-2,3,4,5-tetrahydrodipicolinate + H2O + H(+). Its pathway is amino-acid biosynthesis; L-lysine biosynthesis via DAP pathway; (S)-tetrahydrodipicolinate from L-aspartate: step 3/4. Its function is as follows. Catalyzes the condensation of (S)-aspartate-beta-semialdehyde [(S)-ASA] and pyruvate to 4-hydroxy-tetrahydrodipicolinate (HTPA). The protein is 4-hydroxy-tetrahydrodipicolinate synthase of Synechococcus sp. (strain JA-2-3B'a(2-13)) (Cyanobacteria bacterium Yellowstone B-Prime).